A 533-amino-acid polypeptide reads, in one-letter code: Calcium uptake protein 1 homolog, mitochondrial (533 aa).

The N-terminal 13 residues, 1–13, are a transit peptide targeting the mitochondrion; the sequence is MLRHNFRSSIFIR. Residues 127 to 147 are disordered; sequence PFRPEASQKEESTDSGTEIEV. 3 consecutive EF-hand domains span residues 270 to 305, 337 to 358, and 465 to 500; these read TSHADFALAFKIFDVDGNGALDKEEFTKVQQLIMSQ, KDGKGSLSSEKFIEFQERLQHD, and LSDHVVDVVITLFDDNLDGKLSHEEMVAVMRRRMRR. The Ca(2+) site is built by Asp-283, Asp-285, Asn-287, and Glu-294.

The protein belongs to the MICU1 family. MICU1 subfamily.

The protein localises to the mitochondrion intermembrane space. The protein resides in the mitochondrion inner membrane. Functionally, calcium sensor of the mitochondrial calcium uniporter (mcu-1) channel, which senses calcium level via its EF-hand domains. At low calcium levels, micu-1 occludes the pore of the mcu-1 channel, preventing mitochondrial calcium uptake. At higher calcium levels, calcium-binding to micu-1 induces a conformational change that weakens mcu-1-micu-1 interactions and moves micu-1 away from the pore, allowing calcium permeation through the mcu-1 channel. Also required to protect against manganese toxicity by preventing manganese uptake by mcu-1. Modulates the activity of the mitochondrial calcium uniporter protein mcu-1 depending on the level of intracellular calcium in PLM touch receptor neurons following axonal injury. This chain is Calcium uptake protein 1 homolog, mitochondrial, found in Caenorhabditis briggsae.